We begin with the raw amino-acid sequence, 446 residues long: Citrate/sodium symporter (446 aa).

Over 1–27 (MTNMSQPPATEKKGVSDLLGFKIFGMP) the chain is Cytoplasmic. The helical transmembrane segment at 28–44 (LPLYAFALITLLLSHFY) threads the bilayer. Residues 45-50 (NALPTD) lie on the Periplasmic side of the membrane. Residues 51–71 (IVGGFAIMFIIGAIFGEIGKR) form a helical membrane-spanning segment. Residues 72–80 (LPIFNKYIG) are Cytoplasmic-facing. The chain crosses the membrane as a helical span at residues 81–95 (GAPVMIFLVAAYFVY). Residues 96 to 115 (AGIFTQKEIDAISNVMDKSN) lie on the Periplasmic side of the membrane. The helical transmembrane segment at 116 to 130 (FLNLFIAVLITGAIL) threads the bilayer. Topologically, residues 131 to 136 (SVNRRL) are cytoplasmic. A helical transmembrane segment spans residues 137–166 (LLKSLLGYIPTILMGIVGASIFGIAIGLVF). The Periplasmic segment spans residues 167-181 (GIPVDRIMMLYVLPI). Na(+)-binding residues include Ile-181 and Gly-183. An intramembrane region (helical) is located at residues 182-189 (MGGGNGAG). Citrate is bound by residues Asn-186 and Gly-187. Residues 190-212 (AVPLSEIYHSVTGRSREEYYSTA) are Periplasmic-facing. The chain crosses the membrane as a helical span at residues 213–233 (IAILTIANIFAIVFAAVLDII). Over 234-264 (GKKHTWLSGEGELVRKASFKVEEDEKTGQIT) the chain is Cytoplasmic. Residues 265–287 (HRETAVGLVLSTTCFLLAYVVAK) traverse the membrane as a helical segment. At 288–299 (KILPSIGGVAIH) the chain is on the periplasmic side. Residues 300-315 (YFAWMVLIVAALNASG) form a helical membrane-spanning segment. At 316-327 (LCSPEIKAGAKR) the chain is on the cytoplasmic side. The helical transmembrane segment at 328–351 (LSDFFSKQLLWVLMVGVGVCYTDL) threads the bilayer. Topologically, residues 352–359 (QEIINAIT) are periplasmic. The chain crosses the membrane as a helical span at residues 360 to 381 (FANVVIAAIIVIGAVLGAAIGG). Over 382–398 (WLMGFFPIESAITAGLC) the chain is Cytoplasmic. Residues Met-399 and Asn-401 each contribute to the Na(+) site. The helical intramembrane region spans 399–406 (MANRGGSG). Citrate-binding residues include Arg-402, Gly-404, and Ser-405. Over 407–416 (DLEVLSACNR) the chain is Cytoplasmic. Residues 417–438 (MNLISYAQISSRLGGGIVLVIA) form a helical membrane-spanning segment. A citrate-binding site is contributed by Arg-428. At 439-446 (SIVFGMMI) the chain is on the periplasmic side.

It belongs to the 2-hydroxycarboxylate transporter (2-HCT) (TC 2.A.24) family. Homodimer.

It localises to the cell inner membrane. The catalysed reaction is citrate(out) + 2 Na(+)(out) = citrate(in) + 2 Na(+)(in). With respect to regulation, in the absence of Na(+), transport is inhibited by the thiol reagents N-ethylmaleimide (NEM) and the methanethiosulfonate (MTS) derivatives MTSEA, MTSET and MTSES. However, inactivation by NEM, MTSES and MTSET is prevented by the presence of Na(+). In the absence of Na(+), the substrate citrate has no effect on the inactivation by permeable or impermeable thiol reagents. In contrast, when subsaturating concentrations of Na(+) are present, citrate significantly reduces inactivation, suggesting ordered binding of the substrate and co-ion; citrate is bound after Na(+). The membrane impermeable bulky maleimide AmdiS does not inactivate the transporter in right-side-out membrane vesicles. The apparent affinity for Na(+) decreases with increasing proton concentration. Protons cannot replace Na(+) in the translocation step but the decrease in apparent affinity for Na(+) towards lower pH suggests that protons can compete with Na(+) for the cation-binding sites. Secondary active transporter that catalyzes the uptake of citrate across the membrane with the concomitant uptake of sodium. There are conflicting data regarding exact substrate stoichiometry: the sodium/citrate stoichiometry was predicted to be 1, but the latest studies suggest that CitS transports citrate in symport with 2 sodium ions. Transports citrate as a divalent citrate anion, H-citrate(2-). Shows narrow substrate specificity and is very specific, transporting only citrate and to a low extent citromalate. Symport of Na(+) is absolutely required in the range pH 5-7 because no uptake can be detected in the absence of Na(+). Lithium can replace Na(+) in the symport reaction but it takes about a 200-fold higher concentration of Li(+) over Na(+) to achieve the same rate of uptake. The polypeptide is Citrate/sodium symporter (Klebsiella pneumoniae).